The primary structure comprises 113 residues: MAGFGLPNFGQLTEAFRKAQQIQQDAQKLQEELDAMEIEGNSEDGRASIWLSGNQQPLRVRLDPSLLSEGQEATEAATLAALQSAYERSTGTMKERMEELTGGLNLNLPGMGG.

Belongs to the YbaB/EbfC family. In terms of assembly, homodimer.

Its subcellular location is the cytoplasm. The protein resides in the nucleoid. Its function is as follows. Binds to DNA and alters its conformation. May be involved in regulation of gene expression, nucleoid organization and DNA protection. The polypeptide is Nucleoid-associated protein sync_0026 (Synechococcus sp. (strain CC9311)).